The primary structure comprises 356 residues: Phospho-N-acetylmuramoyl-pentapeptide-transferase (356 aa).

A run of 10 helical transmembrane segments spans residues 3-23, 51-71, 80-100, 114-134, 152-172, 185-205, 227-247, 254-274, 279-299, and 333-353; these read QILF…PLLI, TMGG…AKVI, GLLV…DDYI, AKMA…LQFP, FGWS…ILAM, LATG…LWQF, PLDL…FLWW, IFMG…LAIL, FLLA…VIQV, and FWII…AGWA.

This sequence belongs to the glycosyltransferase 4 family. MraY subfamily. Requires Mg(2+) as cofactor.

It is found in the cell membrane. The catalysed reaction is UDP-N-acetyl-alpha-D-muramoyl-L-alanyl-gamma-D-glutamyl-meso-2,6-diaminopimeloyl-D-alanyl-D-alanine + di-trans,octa-cis-undecaprenyl phosphate = di-trans,octa-cis-undecaprenyl diphospho-N-acetyl-alpha-D-muramoyl-L-alanyl-D-glutamyl-meso-2,6-diaminopimeloyl-D-alanyl-D-alanine + UMP. It functions in the pathway cell wall biogenesis; peptidoglycan biosynthesis. In terms of biological role, catalyzes the initial step of the lipid cycle reactions in the biosynthesis of the cell wall peptidoglycan: transfers peptidoglycan precursor phospho-MurNAc-pentapeptide from UDP-MurNAc-pentapeptide onto the lipid carrier undecaprenyl phosphate, yielding undecaprenyl-pyrophosphoryl-MurNAc-pentapeptide, known as lipid I. The chain is Phospho-N-acetylmuramoyl-pentapeptide-transferase from Streptomyces griseus subsp. griseus (strain JCM 4626 / CBS 651.72 / NBRC 13350 / KCC S-0626 / ISP 5235).